A 350-amino-acid polypeptide reads, in one-letter code: Histidinol-phosphate aminotransferase 1 (350 aa).

Lysine 210 bears the N6-(pyridoxal phosphate)lysine mark.

Belongs to the class-II pyridoxal-phosphate-dependent aminotransferase family. Histidinol-phosphate aminotransferase subfamily. Homodimer. The cofactor is pyridoxal 5'-phosphate.

The enzyme catalyses L-histidinol phosphate + 2-oxoglutarate = 3-(imidazol-4-yl)-2-oxopropyl phosphate + L-glutamate. It functions in the pathway amino-acid biosynthesis; L-histidine biosynthesis; L-histidine from 5-phospho-alpha-D-ribose 1-diphosphate: step 7/9. This chain is Histidinol-phosphate aminotransferase 1, found in Pseudomonas fluorescens (strain Pf0-1).